The primary structure comprises 317 residues: Melanocyte-stimulating hormone receptor (317 aa).

Residues 1 to 37 lie on the Extracellular side of the membrane; sequence MPMQGAQKRLLGSLNSTPTATPNLGLAANHTGAPCLE. Asparagine 29 carries N-linked (GlcNAc...) asparagine glycosylation. Residues 38–63 traverse the membrane as a helical segment; that stretch reads VSIPDGLFLSLGLVSLVENVLVVAAI. Residues 64–72 lie on the Cytoplasmic side of the membrane; it reads AKNRNLHSP. Residues 73 to 93 traverse the membrane as a helical segment; it reads MYCFICCLALSDLLVSSSNML. Residues 94–118 lie on the Extracellular side of the membrane; it reads ETAVILLLEAGALATRASVVQQLQN. Residues 119 to 140 form a helical membrane-spanning segment; sequence TIDVLTCSSMLCSLCFLGAIAV. At 141–163 the chain is on the cytoplasmic side; sequence DRHVSIFYALRYHSIMTLARARR. Residues 164–183 traverse the membrane as a helical segment; the sequence is AIAAIWVASVLSSTLFIAYC. The Extracellular portion of the chain corresponds to 184–191; that stretch reads DHAXVLLC. Residues 192–211 traverse the membrane as a helical segment; the sequence is LVVFFLAMLVLMAVLYVHML. Topologically, residues 212–240 are cytoplasmic; that stretch reads ARACQHAQGITRLHQRQPPAHQGFGFRGA. A helical transmembrane segment spans residues 241-266; that stretch reads ATLTILLGIFFLCWGPFFLHLTLVVL. The Extracellular segment spans residues 267 to 279; sequence CPQHLTCSCIFKN. The chain crosses the membrane as a helical span at residues 280-300; the sequence is FKVFLTLIICSTIIDPLIYAF. At 301-317 the chain is on the cytoplasmic side; the sequence is RSQELRRTLKELLLCSW. Cysteine 315 carries the S-palmitoyl cysteine lipid modification.

It belongs to the G-protein coupled receptor 1 family. As to quaternary structure, interacts with MGRN1, but does not undergo MGRN1-mediated ubiquitination; this interaction competes with GNAS-binding and thus inhibits agonist-induced cAMP production. Interacts with OPN3; the interaction results in a decrease in MC1R-mediated cAMP signaling and ultimately a decrease in melanin production in melanocytes.

It localises to the cell membrane. Functionally, receptor for MSH (alpha, beta and gamma) and ACTH. The activity of this receptor is mediated by G proteins which activate adenylate cyclase. Mediates melanogenesis, the production of eumelanin (black/brown) and phaeomelanin (red/yellow), via regulation of cAMP signaling in melanocytes. This Ateles paniscus (Black spider monkey) protein is Melanocyte-stimulating hormone receptor (MC1R).